The sequence spans 313 residues: Oxaloacetate tautomerase Fahd2a, mitochondrial (313 aa).

The N-terminal 84 residues, 1–84 (MLGSGRRRLL…TALSVARRAL (84 aa)), are a transit peptide targeting the mitochondrion. Residues E159, E161, and D190 each coordinate Mg(2+). K202 bears the N6-acetyllysine; alternate mark. K202 bears the N6-succinyllysine; alternate mark. K233 is modified (N6-acetyllysine).

It belongs to the FAH family. Mg(2+) serves as cofactor. It depends on Mn(2+) as a cofactor.

The protein resides in the mitochondrion. The enzyme catalyses oxaloacetate = enol-oxaloacetate. Tautomerase that converts enol-oxaloacetate, a strong inhibitor of succinate dehydrogenase, to the physiological keto form of oxaloacetate. It is thereby required to maximize aerobic respiration efficiency by preventing succinate dehydrogenase inhibition. The polypeptide is Oxaloacetate tautomerase Fahd2a, mitochondrial (Rattus norvegicus (Rat)).